The sequence spans 595 residues: Actin-histidine N-methyltransferase (595 aa).

Positions 1–22 (MGKKSRVKTQKSGTGATATVSP) are disordered. Residues 10–20 (QKSGTGATATV) are compositionally biased toward polar residues. Residues Arg75, 104–106 (EGF), Arg254, 275–279 (DMCNH), and 325–327 (SGF) contribute to the S-adenosyl-L-methionine site. The SET domain occupies 94-314 (EGFEMVNFKE…AGEQIYIFYG (221 aa)). The residue at position 513 (Ser513) is a Phosphoserine. Polar residues predominate over residues 549-563 (ENGLVNGENSIPNGT). A disordered region spans residues 549–595 (ENGLVNGENSIPNGTRSEDENLNQEESKRAVEDAKGSSSDRADAVKE). Residues 573–595 (EESKRAVEDAKGSSSDRADAVKE) are compositionally biased toward basic and acidic residues.

It belongs to the class V-like SAM-binding methyltransferase superfamily. SETD3 actin-histidine methyltransferase family. As to quaternary structure, interacts with MYOD1. Post-translationally, phosphorylated by GSK3B, which is required for recognition by the SCF(FBXW7) complex and subsequent degradation. Ubiquitinated by the SCF(FBXW7) complex following phosphorylation by GSK3B, leading to its degradation by the proteasome.

It localises to the cytoplasm. The protein localises to the nucleus. It catalyses the reaction L-histidyl-[protein] + S-adenosyl-L-methionine = N(tele)-methyl-L-histidyl-[protein] + S-adenosyl-L-homocysteine + H(+). Functionally, protein-histidine N-methyltransferase that specifically mediates 3-methylhistidine (tele-methylhistidine) methylation of actin at 'His-73'. Histidine methylation of actin is required for smooth muscle contraction of the laboring uterus during delivery. Does not have protein-lysine N-methyltransferase activity and probably only catalyzes histidine methylation of actin. The protein is Actin-histidine N-methyltransferase of Callithrix jacchus (White-tufted-ear marmoset).